Reading from the N-terminus, the 264-residue chain is Phosphatidylglycerol--prolipoprotein diacylglyceryl transferase (264 aa).

7 helical membrane-spanning segments follow: residues 14–34, 57–77, 89–109, 127–147, 176–196, 202–222, and 235–255; these read VGPL…LLFM, LLLY…VLFF, ILAI…VLVA, FIAP…FING, QLYQ…VYSA, KAVS…AEFF, and LGLS…VGLL. R140 lines the a 1,2-diacyl-sn-glycero-3-phospho-(1'-sn-glycerol) pocket.

This sequence belongs to the Lgt family.

It localises to the cell inner membrane. It carries out the reaction L-cysteinyl-[prolipoprotein] + a 1,2-diacyl-sn-glycero-3-phospho-(1'-sn-glycerol) = an S-1,2-diacyl-sn-glyceryl-L-cysteinyl-[prolipoprotein] + sn-glycerol 1-phosphate + H(+). It participates in protein modification; lipoprotein biosynthesis (diacylglyceryl transfer). Its function is as follows. Catalyzes the transfer of the diacylglyceryl group from phosphatidylglycerol to the sulfhydryl group of the N-terminal cysteine of a prolipoprotein, the first step in the formation of mature lipoproteins. This is Phosphatidylglycerol--prolipoprotein diacylglyceryl transferase from Aromatoleum aromaticum (strain DSM 19018 / LMG 30748 / EbN1) (Azoarcus sp. (strain EbN1)).